The sequence spans 306 residues: D-alanine--D-alanine ligase (306 aa).

The ATP-grasp domain maps to 101 to 303; it reads KQVWQAVGLP…FSQLVVKILE (203 aa). Residue 134–189 participates in ATP binding; sequence FTHLGLPLIVKPSREGSSVGMSKVNTLSDLPAALEEAFRHDDDVLVEKWLSGPEYT. Positions 257, 270, and 272 each coordinate Mg(2+).

Belongs to the D-alanine--D-alanine ligase family. Mg(2+) serves as cofactor. The cofactor is Mn(2+).

It localises to the cytoplasm. The enzyme catalyses 2 D-alanine + ATP = D-alanyl-D-alanine + ADP + phosphate + H(+). The protein operates within cell wall biogenesis; peptidoglycan biosynthesis. In terms of biological role, cell wall formation. The polypeptide is D-alanine--D-alanine ligase (Pectobacterium atrosepticum (strain SCRI 1043 / ATCC BAA-672) (Erwinia carotovora subsp. atroseptica)).